Here is a 356-residue protein sequence, read N- to C-terminus: UDP-N-acetylglucosamine--N-acetylmuramyl-(pentapeptide) pyrophosphoryl-undecaprenol N-acetylglucosamine transferase (356 aa).

3 residues coordinate UDP-N-acetyl-alpha-D-glucosamine: Arg166, Ser196, and Gln290.

It belongs to the glycosyltransferase 28 family. MurG subfamily.

The protein localises to the cell membrane. It catalyses the reaction Mur2Ac(oyl-L-Ala-gamma-D-Glu-L-Lys-D-Ala-D-Ala)-di-trans,octa-cis-undecaprenyl diphosphate + UDP-N-acetyl-alpha-D-glucosamine = beta-D-GlcNAc-(1-&gt;4)-Mur2Ac(oyl-L-Ala-gamma-D-Glu-L-Lys-D-Ala-D-Ala)-di-trans,octa-cis-undecaprenyl diphosphate + UDP + H(+). It participates in cell wall biogenesis; peptidoglycan biosynthesis. In terms of biological role, cell wall formation. Catalyzes the transfer of a GlcNAc subunit on undecaprenyl-pyrophosphoryl-MurNAc-pentapeptide (lipid intermediate I) to form undecaprenyl-pyrophosphoryl-MurNAc-(pentapeptide)GlcNAc (lipid intermediate II). The polypeptide is UDP-N-acetylglucosamine--N-acetylmuramyl-(pentapeptide) pyrophosphoryl-undecaprenol N-acetylglucosamine transferase (Staphylococcus aureus (strain MRSA252)).